We begin with the raw amino-acid sequence, 596 residues long: Elongation factor 4 (596 aa).

A tr-type G domain is found at Asp2–Lys184. GTP contacts are provided by residues Asp14–Thr19 and Asn131–Asp134.

It belongs to the TRAFAC class translation factor GTPase superfamily. Classic translation factor GTPase family. LepA subfamily.

It localises to the cell inner membrane. The catalysed reaction is GTP + H2O = GDP + phosphate + H(+). Functionally, required for accurate and efficient protein synthesis under certain stress conditions. May act as a fidelity factor of the translation reaction, by catalyzing a one-codon backward translocation of tRNAs on improperly translocated ribosomes. Back-translocation proceeds from a post-translocation (POST) complex to a pre-translocation (PRE) complex, thus giving elongation factor G a second chance to translocate the tRNAs correctly. Binds to ribosomes in a GTP-dependent manner. This is Elongation factor 4 from Dechloromonas aromatica (strain RCB).